Here is a 339-residue protein sequence, read N- to C-terminus: Mycothiol acetyltransferase (339 aa).

N-acetyltransferase domains follow at residues 8–174 (YEQL…QGLT) and 176–339 (LTYP…GELN). A 1D-myo-inositol 2-(L-cysteinylamino)-2-deoxy-alpha-D-glucopyranoside-binding site is contributed by Glu39. 85–87 (LAV) contacts acetyl-CoA. Residues Glu207, Lys254, and Glu270 each contribute to the 1D-myo-inositol 2-(L-cysteinylamino)-2-deoxy-alpha-D-glucopyranoside site. Residue 274 to 276 (VCL) coordinates acetyl-CoA. Tyr308 contributes to the 1D-myo-inositol 2-(L-cysteinylamino)-2-deoxy-alpha-D-glucopyranoside binding site.

This sequence belongs to the acetyltransferase family. MshD subfamily. In terms of assembly, monomer.

The catalysed reaction is 1D-myo-inositol 2-(L-cysteinylamino)-2-deoxy-alpha-D-glucopyranoside + acetyl-CoA = mycothiol + CoA + H(+). In terms of biological role, catalyzes the transfer of acetyl from acetyl-CoA to desacetylmycothiol (Cys-GlcN-Ins) to form mycothiol. This Corynebacterium urealyticum (strain ATCC 43042 / DSM 7109) protein is Mycothiol acetyltransferase.